Reading from the N-terminus, the 293-residue chain is Protein Pat (293 aa).

The 101-residue stretch at 187-287 (LPDIILNPLD…LLLRTRQDRA (101 aa)) folds into the BEN domain.

In terms of assembly, interacts with poc1b. As to expression, an mRNA and protein component of germ plasm and primordial germ cells (PGCs) throughout oogenesis and early development, being first localized to the granulo-fibrillar material (GFM) of the mitochondrial cloud in stage I and II oocytes and to the periphery of mature germinal granules both in oocytes and in embryos. Shows some somatic expression including the ectodermal cells of tailbud embryos. In adults, only expressed in ovaries.

The protein localises to the cytoplasm. It localises to the nucleus. In terms of biological role, probably plays a role in germ plasm formation, positioning and maintenance. In Xenopus laevis (African clawed frog), this protein is Protein Pat.